The primary structure comprises 218 residues: Eukaryotic translation initiation factor 3 subunit K (218 aa).

The PCI domain occupies 42–204 (YDLEANLAVL…NIKPKNIVEK (163 aa)).

Belongs to the eIF-3 subunit K family. In terms of assembly, component of the eukaryotic translation initiation factor 3 (eIF-3) complex, which is composed of 13 subunits: eif3a, eif3b, eif3c, eif3d, eif3e, eif3f, eif3g, eif3h, eif3i, eif3j, eif3k, eif3l and eif3m.

It localises to the nucleus. Its subcellular location is the cytoplasm. In terms of biological role, component of the eukaryotic translation initiation factor 3 (eIF-3) complex, which is involved in protein synthesis of a specialized repertoire of mRNAs and, together with other initiation factors, stimulates binding of mRNA and methionyl-tRNAi to the 40S ribosome. The eIF-3 complex specifically targets and initiates translation of a subset of mRNAs involved in cell proliferation. This Xenopus tropicalis (Western clawed frog) protein is Eukaryotic translation initiation factor 3 subunit K (eif3k).